Here is a 338-residue protein sequence, read N- to C-terminus: Large ribosomal subunit protein uL10 (338 aa).

A compositionally biased stretch (basic and acidic residues) spans 309–327 (KAEVEEAKEEEKEEKKEEA). The interval 309 to 338 (KAEVEEAKEEEKEEKKEEAAPAAAGLGLLF) is disordered.

It belongs to the universal ribosomal protein uL10 family. Part of the 50S ribosomal subunit. Forms part of the ribosomal stalk which helps the ribosome interact with GTP-bound translation factors. Forms a heptameric L10(L12)2(L12)2(L12)2 complex, where L10 forms an elongated spine to which the L12 dimers bind in a sequential fashion.

In terms of biological role, forms part of the ribosomal stalk, playing a central role in the interaction of the ribosome with GTP-bound translation factors. The polypeptide is Large ribosomal subunit protein uL10 (Methanothermococcus thermolithotrophicus (Methanococcus thermolithotrophicus)).